Consider the following 483-residue polypeptide: Regulatory protein ViaA (483 aa).

This sequence belongs to the ViaA family. As to quaternary structure, homodimer. Interacts with RavA.

It is found in the cytoplasm. In terms of biological role, component of the RavA-ViaA chaperone complex, which may act on the membrane to optimize the function of some of the respiratory chains. ViaA stimulates the ATPase activity of RavA. The sequence is that of Regulatory protein ViaA from Salmonella dublin (strain CT_02021853).